Consider the following 357-residue polypeptide: Putative diaminopimelate epimerase, chloroplastic (357 aa).

A chloroplast-targeting transit peptide spans methionine 1–valine 47. Active-site residues include cysteine 145 and cysteine 300.

Belongs to the diaminopimelate epimerase family.

Its subcellular location is the plastid. It localises to the chloroplast. It catalyses the reaction (2S,6S)-2,6-diaminopimelate = meso-2,6-diaminopimelate. It participates in amino-acid biosynthesis; L-lysine biosynthesis via DAP pathway; DL-2,6-diaminopimelate from LL-2,6-diaminopimelate: step 1/1. The protein is Putative diaminopimelate epimerase, chloroplastic (DAPF) of Oryza sativa subsp. indica (Rice).